The sequence spans 475 residues: Sulfate adenylyltransferase subunit 1 (475 aa).

Residues 25-239 (KSLLRFLTCG…EVLETVEIQR (215 aa)) enclose the tr-type G domain. The segment at 34–41 (GSVDDGKS) is G1. 34–41 (GSVDDGKS) is a GTP binding site. The segment at 92–96 (GITID) is G2. The interval 113–116 (DTPG) is G3. Residues 113–117 (DTPGH) and 168–171 (NKMD) contribute to the GTP site. The interval 168–171 (NKMD) is G4. The G5 stretch occupies residues 206-208 (SAL).

It belongs to the TRAFAC class translation factor GTPase superfamily. Classic translation factor GTPase family. CysN/NodQ subfamily. As to quaternary structure, heterodimer composed of CysD, the smaller subunit, and CysN.

It carries out the reaction sulfate + ATP + H(+) = adenosine 5'-phosphosulfate + diphosphate. It functions in the pathway sulfur metabolism; hydrogen sulfide biosynthesis; sulfite from sulfate: step 1/3. With CysD forms the ATP sulfurylase (ATPS) that catalyzes the adenylation of sulfate producing adenosine 5'-phosphosulfate (APS) and diphosphate, the first enzymatic step in sulfur assimilation pathway. APS synthesis involves the formation of a high-energy phosphoric-sulfuric acid anhydride bond driven by GTP hydrolysis by CysN coupled to ATP hydrolysis by CysD. The protein is Sulfate adenylyltransferase subunit 1 of Escherichia coli O139:H28 (strain E24377A / ETEC).